Consider the following 133-residue polypeptide: Ribonuclease P protein component (133 aa).

It belongs to the RnpA family. Consists of a catalytic RNA component (M1 or rnpB) and a protein subunit.

The catalysed reaction is Endonucleolytic cleavage of RNA, removing 5'-extranucleotides from tRNA precursor.. Functionally, RNaseP catalyzes the removal of the 5'-leader sequence from pre-tRNA to produce the mature 5'-terminus. It can also cleave other RNA substrates such as 4.5S RNA. The protein component plays an auxiliary but essential role in vivo by binding to the 5'-leader sequence and broadening the substrate specificity of the ribozyme. The polypeptide is Ribonuclease P protein component (Corynebacterium glutamicum (strain R)).